The following is a 397-amino-acid chain: tRNA(Met) cytidine acetate ligase (397 aa).

ATP is bound by residues 7-20 (VTEY…HIYH), G101, N152, and R177.

This sequence belongs to the TmcAL family.

The protein resides in the cytoplasm. The enzyme catalyses cytidine(34) in elongator tRNA(Met) + acetate + ATP = N(4)-acetylcytidine(34) in elongator tRNA(Met) + AMP + diphosphate. Functionally, catalyzes the formation of N(4)-acetylcytidine (ac(4)C) at the wobble position of elongator tRNA(Met), using acetate and ATP as substrates. First activates an acetate ion to form acetyladenylate (Ac-AMP) and then transfers the acetyl group to tRNA to form ac(4)C34. This Leuconostoc citreum (strain KM20) protein is tRNA(Met) cytidine acetate ligase.